Reading from the N-terminus, the 1310-residue chain is Clustered mitochondria protein homolog (1310 aa).

Residues 375–619 (DITRSQESYL…RVTPLDVVWQ (245 aa)) enclose the Clu domain. Positions 662–682 (KAQEDAANKEQPSETTESKEG) are enriched in basic and acidic residues. Disordered regions lie at residues 662–692 (KAQE…EEAL) and 931–960 (VANG…SRAV). TPR repeat units follow at residues 1033–1066 (AKLY…TERT), 1075–1108 (ILAY…WKII), and 1117–1150 (ITTM…CESL). Disordered stretches follow at residues 1245 to 1266 (VQPQ…ANAS) and 1281 to 1310 (GGDA…KSSA).

This sequence belongs to the CLU family. As to quaternary structure, may associate with the eukaryotic translation initiation factor 3 (eIF-3) complex.

It is found in the cytoplasm. Functionally, mRNA-binding protein involved in proper cytoplasmic distribution of mitochondria. This is Clustered mitochondria protein homolog from Aspergillus fumigatus (strain CBS 144.89 / FGSC A1163 / CEA10) (Neosartorya fumigata).